Consider the following 185-residue polypeptide: Large ribosomal subunit protein uL5 (185 aa).

Belongs to the universal ribosomal protein uL5 family. In terms of assembly, part of the 50S ribosomal subunit; part of the 5S rRNA/L5/L18/L25 subcomplex. Contacts the 5S rRNA and the P site tRNA. Forms a bridge to the 30S subunit in the 70S ribosome.

In terms of biological role, this is one of the proteins that bind and probably mediate the attachment of the 5S RNA into the large ribosomal subunit, where it forms part of the central protuberance. In the 70S ribosome it contacts protein S13 of the 30S subunit (bridge B1b), connecting the 2 subunits; this bridge is implicated in subunit movement. Contacts the P site tRNA; the 5S rRNA and some of its associated proteins might help stabilize positioning of ribosome-bound tRNAs. This is Large ribosomal subunit protein uL5 from Rhizobium johnstonii (strain DSM 114642 / LMG 32736 / 3841) (Rhizobium leguminosarum bv. viciae).